The following is a 283-amino-acid chain: Glutamate racemase (283 aa).

Substrate is bound by residues 28 to 29 (DS) and 60 to 61 (YG). The active-site Proton donor/acceptor is the Cys-92. 93 to 94 (NT) lines the substrate pocket. Cys-204 acts as the Proton donor/acceptor in catalysis. 205–206 (TH) contributes to the substrate binding site.

The protein belongs to the aspartate/glutamate racemases family.

The catalysed reaction is L-glutamate = D-glutamate. It participates in cell wall biogenesis; peptidoglycan biosynthesis. Its function is as follows. Provides the (R)-glutamate required for cell wall biosynthesis. The protein is Glutamate racemase of Salmonella enteritidis PT4 (strain P125109).